Reading from the N-terminus, the 542-residue chain is CTP synthase (542 aa).

The amidoligase domain stretch occupies residues 1 to 265; sequence MPRYIFITGG…DTEILRCFGI (265 aa). Serine 13 serves as a coordination point for CTP. Residue serine 13 coordinates UTP. Residue 14–19 participates in ATP binding; that stretch reads SLGKGL. An L-glutamine-binding site is contributed by tyrosine 54. Aspartate 71 contributes to the ATP binding site. Positions 71 and 139 each coordinate Mg(2+). Residues 146–148, 186–191, and lysine 222 contribute to the CTP site; these read DIE and KTKPTQ. UTP-binding positions include 186–191 and lysine 222; that span reads KTKPTQ. 238–240 contributes to the ATP binding site; sequence RDA. In terms of domain architecture, Glutamine amidotransferase type-1 spans 298-541; the sequence is YVGLLDAYKS…IAAALHQSRM (244 aa). Residue glycine 353 coordinates L-glutamine. Catalysis depends on cysteine 380, which acts as the Nucleophile; for glutamine hydrolysis. Residues 381–384, glutamate 404, and arginine 469 each bind L-glutamine; that span reads YGMQ. Residues histidine 514 and glutamate 516 contribute to the active site.

It belongs to the CTP synthase family. In terms of assembly, homotetramer.

It catalyses the reaction UTP + L-glutamine + ATP + H2O = CTP + L-glutamate + ADP + phosphate + 2 H(+). The catalysed reaction is L-glutamine + H2O = L-glutamate + NH4(+). The enzyme catalyses UTP + NH4(+) + ATP = CTP + ADP + phosphate + 2 H(+). It functions in the pathway pyrimidine metabolism; CTP biosynthesis via de novo pathway; CTP from UDP: step 2/2. With respect to regulation, allosterically activated by GTP, when glutamine is the substrate; GTP has no effect on the reaction when ammonia is the substrate. The allosteric effector GTP functions by stabilizing the protein conformation that binds the tetrahedral intermediate(s) formed during glutamine hydrolysis. Inhibited by the product CTP, via allosteric rather than competitive inhibition. Its function is as follows. Catalyzes the ATP-dependent amination of UTP to CTP with either L-glutamine or ammonia as the source of nitrogen. Regulates intracellular CTP levels through interactions with the four ribonucleotide triphosphates. In Maricaulis maris (strain MCS10) (Caulobacter maris), this protein is CTP synthase.